The sequence spans 331 residues: UPF0194 membrane protein YbhG (331 aa).

Residues 1–19 (MKKPVVIGLVIAAIVAVIA) form the signal peptide. Residues 140–209 (RTISANDLEN…DLQDTTLIAP (70 aa)) adopt a coiled-coil conformation.

Belongs to the UPF0194 family.

The protein resides in the periplasm. In Salmonella typhi, this protein is UPF0194 membrane protein YbhG (ybhG).